Reading from the N-terminus, the 403-residue chain is Dihydroorotase (403 aa).

Zn(2+) is bound by residues H48 and H50. Substrate contacts are provided by residues 50-52 (HLR) and N82. Zn(2+) is bound by residues E140, H172, H211, and D277. Residue D277 is part of the active site. H281 is a substrate binding site.

Belongs to the metallo-dependent hydrolases superfamily. DHOase family. Class I DHOase subfamily. Requires Zn(2+) as cofactor.

It carries out the reaction (S)-dihydroorotate + H2O = N-carbamoyl-L-aspartate + H(+). It functions in the pathway pyrimidine metabolism; UMP biosynthesis via de novo pathway; (S)-dihydroorotate from bicarbonate: step 3/3. Functionally, catalyzes the reversible cyclization of carbamoyl aspartate to dihydroorotate. The protein is Dihydroorotase of Archaeoglobus fulgidus (strain ATCC 49558 / DSM 4304 / JCM 9628 / NBRC 100126 / VC-16).